The chain runs to 228 residues: Large ribosomal subunit protein uL16 (228 aa).

This sequence belongs to the universal ribosomal protein uL16 family. As to quaternary structure, component of the small ribosomal subunit. Mature ribosomes consist of a small (40S) and a large (60S) subunit. The 40S subunit contains about 33 different proteins and 1 molecule of RNA (18S). The 60S subunit contains about 49 different proteins and 3 molecules of RNA (25S, 5.8S and 5S).

The sequence is that of Large ribosomal subunit protein uL16 (RPL10) from Pinus taeda (Loblolly pine).